Here is a 396-residue protein sequence, read N- to C-terminus: Elongation factor Tu (396 aa).

In terms of domain architecture, tr-type G spans 10–205 (KPHVNIGTIG…ACDDSIPDPE (196 aa)). Residues 19-26 (GHVDHGKT) form a G1 region. Position 19–26 (19–26 (GHVDHGKT)) interacts with GTP. Mg(2+) is bound at residue Thr-26. The tract at residues 62-66 (GITIN) is G2. The segment at 83–86 (DAPG) is G3. Residues 83-87 (DAPGH) and 138-141 (NKCD) each bind GTP. A G4 region spans residues 138–141 (NKCD). Positions 175–177 (SAL) are G5.

Belongs to the TRAFAC class translation factor GTPase superfamily. Classic translation factor GTPase family. EF-Tu/EF-1A subfamily. Monomer.

Its subcellular location is the cytoplasm. It carries out the reaction GTP + H2O = GDP + phosphate + H(+). In terms of biological role, GTP hydrolase that promotes the GTP-dependent binding of aminoacyl-tRNA to the A-site of ribosomes during protein biosynthesis. This chain is Elongation factor Tu, found in Corynebacterium diphtheriae (strain ATCC 700971 / NCTC 13129 / Biotype gravis).